Here is a 127-residue protein sequence, read N- to C-terminus: UPF0325 protein VV1_1856 (127 aa).

It belongs to the UPF0325 family.

The chain is UPF0325 protein VV1_1856 from Vibrio vulnificus (strain CMCP6).